The sequence spans 235 residues: uncharacterized protein (235 aa).

A helical transmembrane segment spans residues 27–47 (AMKLWSTWITLLILTFFCSEC). The CX domain occupies 124–185 (YFWGESKYVP…CCGYDCCSNS (62 aa)). A helical membrane pass occupies residues 187 to 207 (IFTSIFSLLVILLIVSVLSIF).

The protein resides in the membrane. This is an uncharacterized protein from Caenorhabditis elegans.